Here is a 171-residue protein sequence, read N- to C-terminus: Co-chaperone protein HscB (171 aa).

The 73-residue stretch at Asp-2–Leu-74 folds into the J domain.

Belongs to the HscB family. In terms of assembly, interacts with HscA and stimulates its ATPase activity. Interacts with IscU.

Functionally, co-chaperone involved in the maturation of iron-sulfur cluster-containing proteins. Seems to help targeting proteins to be folded toward HscA. The protein is Co-chaperone protein HscB of Klebsiella pneumoniae (strain 342).